Consider the following 363-residue polypeptide: MNEKLSTPSNITIERKLNHVEICLHGNVSFEGTTTGLERYAIEHQAVPEINYADINLSATLLGRTIGAPLMISSMTGGYHEAATLNRQFAQAAEHFRIPLGVGSMRQALENNEHRESFAVVRKAAPSVPVFANIGAPEVAAGLESSQIETMLDLIQADGLIVHLNAAQELFQPEGNTNFHGFLDQLASLTAKTPVPVIAKEVGSGISAEAARLLIDAGVKVIDVAGAGGTSWQKVEEVRYIKRFGNENRFSPEALNELLNWGIPTATCLEEIGRLKKNHPQYQPIEIIASGGIQSGIDVAKTILLGASVAASAGRLLKALHEGKLLQTIEMWLNDLKAVMFLTGSLSLEQLQKKRMTLKHLPT.

Substrate is bound at residue arginine 15 to lysine 16. FMN is bound by residues serine 73, serine 74 to threonine 76, serine 104, and asparagine 133. Serine 104–arginine 106 is a substrate binding site. Glutamine 168 contributes to the substrate binding site. Residue glutamate 169 participates in Mg(2+) binding. FMN contacts are provided by residues lysine 200, threonine 230, and alanine 313–glycine 314.

Belongs to the IPP isomerase type 2 family. As to quaternary structure, homooctamer. Dimer of tetramers. Requires FMN as cofactor. It depends on NADPH as a cofactor. Mg(2+) is required as a cofactor.

The protein resides in the cytoplasm. It catalyses the reaction isopentenyl diphosphate = dimethylallyl diphosphate. In terms of biological role, involved in the biosynthesis of isoprenoids. Catalyzes the 1,3-allylic rearrangement of the homoallylic substrate isopentenyl (IPP) to its allylic isomer, dimethylallyl diphosphate (DMAPP). In Chlorobium phaeobacteroides (strain DSM 266 / SMG 266 / 2430), this protein is Isopentenyl-diphosphate delta-isomerase.